We begin with the raw amino-acid sequence, 317 residues long: Melanocyte-stimulating hormone receptor (317 aa).

Over 1–37 (MSVQGPQRRLLGSVNSTSPAAPRLGLAANQTGPRCLE) the chain is Extracellular. 2 N-linked (GlcNAc...) asparagine glycosylation sites follow: Asn-15 and Asn-29. The helical transmembrane segment at 38–63 (VSVPDGLFLSLGLVSVVENVLVVAAI) threads the bilayer. At 64 to 72 (AKNRNLHSP) the chain is on the cytoplasmic side. Residues 73-93 (MYYFICCLAVSDLLVSVSSVL) traverse the membrane as a helical segment. Residues 94 to 118 (ETAVMLLLEAGTLAGRAAVVQQLDD) are Extracellular-facing. A helical membrane pass occupies residues 119–140 (IIDVLVCGAMVSSLCFLGAIAV). The Cytoplasmic segment spans residues 141–163 (DRYISIFYALRYHSIVTLPRAWR). The chain crosses the membrane as a helical span at residues 164 to 183 (AISAIWVASVLSSTLFIAYY). The Extracellular portion of the chain corresponds to 184–191 (DHTAVLLC). A helical membrane pass occupies residues 192–211 (LVSFFVAMLVLMAVLYVHML). At 212-240 (ARACQHARGIARLHKRQRPVHQGLGLKGA) the chain is on the cytoplasmic side. The helical transmembrane segment at 241–266 (ATLTILLGIFFLCWGPFFLHLSLMVL) threads the bilayer. Over 267–279 (CPRHPICGCVFKN) the chain is Extracellular. The chain crosses the membrane as a helical span at residues 280–300 (FNLFLTLIICNSIVDPLIYAF). Residues 301 to 317 (RSQELRKTLREVLLCSW) are Cytoplasmic-facing. The S-palmitoyl cysteine moiety is linked to residue Cys-315.

This sequence belongs to the G-protein coupled receptor 1 family. As to quaternary structure, interacts with MGRN1, but does not undergo MGRN1-mediated ubiquitination; this interaction competes with GNAS-binding and thus inhibits agonist-induced cAMP production. Interacts with OPN3; the interaction results in a decrease in MC1R-mediated cAMP signaling and ultimately a decrease in melanin production in melanocytes.

The protein localises to the cell membrane. Functionally, receptor for MSH (alpha, beta and gamma) and ACTH. The activity of this receptor is mediated by G proteins which activate adenylate cyclase. Mediates melanogenesis, the production of eumelanin (black/brown) and phaeomelanin (red/yellow), via regulation of cAMP signaling in melanocytes. This chain is Melanocyte-stimulating hormone receptor (MC1R), found in Puma yagouaroundi (Jaguarundi).